We begin with the raw amino-acid sequence, 249 residues long: MERLLIVNADDFGLSKGQNYGIIEACRNGIVTSTTALVNGQAIDHAVQLSRDEPSLAIGMHFVLTMGKPLTAMPGLTRDGVLGKWIWQLAEEDALPLEEITQELASQYLRFIELFGRKPTHLDSHHHVHMFPQIFPIVARFAAEQGIALRADRQMAFDLPVNLRTTQGFSSAFYGEEISESLFLQVLDDAGHRGDRSLEVMCHPAFIDNTIRQSAYCFPRLTELDVLTSASLKGAIAQRGYRLGSYRDV.

Mg(2+) contacts are provided by His61 and His125.

This sequence belongs to the YdjC deacetylase family. ChbG subfamily. Homodimer. Mg(2+) is required as a cofactor.

The protein resides in the cytoplasm. It catalyses the reaction N,N'-diacetylchitobiose + H2O = N-acetyl-beta-D-glucosaminyl-(1-&gt;4)-D-glucosamine + acetate. It carries out the reaction diacetylchitobiose-6'-phosphate + H2O = N'-monoacetylchitobiose-6'-phosphate + acetate. Its pathway is glycan degradation; chitin degradation. Functionally, involved in the degradation of chitin. ChbG is essential for growth on the acetylated chitooligosaccharides chitobiose and chitotriose but is dispensable for growth on cellobiose and chitosan dimer, the deacetylated form of chitobiose. Deacetylation of chitobiose-6-P and chitotriose-6-P is necessary for both the activation of the chb promoter by the regulatory protein ChbR and the hydrolysis of phosphorylated beta-glucosides by the phospho-beta-glucosidase ChbF. Catalyzes the removal of only one acetyl group from chitobiose-6-P to yield monoacetylchitobiose-6-P, the inducer of ChbR and the substrate of ChbF. This chain is Chitooligosaccharide deacetylase, found in Escherichia coli O9:H4 (strain HS).